The primary structure comprises 524 residues: Probable glutamyl-tRNA reductase 3, chloroplastic (524 aa).

Residues M1–R52 constitute a chloroplast transit peptide. Residues T129–R132, S189, E194–Q196, and Q200 each bind substrate. C130 serves as the catalytic Nucleophile. G269–G274 lines the NADP(+) pocket.

Belongs to the glutamyl-tRNA reductase family.

The protein localises to the plastid. The protein resides in the chloroplast. It carries out the reaction (S)-4-amino-5-oxopentanoate + tRNA(Glu) + NADP(+) = L-glutamyl-tRNA(Glu) + NADPH + H(+). The protein operates within porphyrin-containing compound metabolism; protoporphyrin-IX biosynthesis; 5-aminolevulinate from L-glutamyl-tRNA(Glu): step 1/2. Its pathway is porphyrin-containing compound metabolism; chlorophyll biosynthesis. Its function is as follows. Catalyzes the NADPH-dependent reduction of glutamyl-tRNA(Glu) to glutamate 1-semialdehyde (GSA). The sequence is that of Probable glutamyl-tRNA reductase 3, chloroplastic (HEMA3) from Arabidopsis thaliana (Mouse-ear cress).